The sequence spans 496 residues: UDP-glycosyltransferase 73C2 (496 aa).

UDP-alpha-D-glucose is bound by residues serine 297, serine 357 to glutamine 359, histidine 374 to glutamate 382, and phenylalanine 396 to glutamine 399.

The protein belongs to the UDP-glycosyltransferase family.

The sequence is that of UDP-glycosyltransferase 73C2 (UGT73C2) from Arabidopsis thaliana (Mouse-ear cress).